The sequence spans 130 residues: Small ribosomal subunit protein uS9 (130 aa).

The protein belongs to the universal ribosomal protein uS9 family.

In Streptococcus pyogenes serotype M1, this protein is Small ribosomal subunit protein uS9.